The primary structure comprises 374 residues: Chaperone protein DnaJ (374 aa).

One can recognise a J domain in the interval 5 to 70 (DYYEVLGVER…SKRAAYDQYG (66 aa)). Residues 133-211 (GTTVNIRVPT…CHGEGRVEEY (79 aa)) form a CR-type zinc finger. Zn(2+)-binding residues include C146, C149, C163, C166, C185, C188, C199, and C202. 4 CXXCXGXG motif repeats span residues 146–153 (CKPCDGSG), 163–170 (CPTCGGIG), 185–192 (CPRCHGQG), and 199–206 (CDSCHGEG).

This sequence belongs to the DnaJ family. Homodimer. Zn(2+) is required as a cofactor.

It is found in the cytoplasm. In terms of biological role, participates actively in the response to hyperosmotic and heat shock by preventing the aggregation of stress-denatured proteins and by disaggregating proteins, also in an autonomous, DnaK-independent fashion. Unfolded proteins bind initially to DnaJ; upon interaction with the DnaJ-bound protein, DnaK hydrolyzes its bound ATP, resulting in the formation of a stable complex. GrpE releases ADP from DnaK; ATP binding to DnaK triggers the release of the substrate protein, thus completing the reaction cycle. Several rounds of ATP-dependent interactions between DnaJ, DnaK and GrpE are required for fully efficient folding. Also involved, together with DnaK and GrpE, in the DNA replication of plasmids through activation of initiation proteins. The protein is Chaperone protein DnaJ of Pseudomonas fluorescens (strain ATCC BAA-477 / NRRL B-23932 / Pf-5).